The following is a 565-amino-acid chain: Beta-hexosaminidase subunit beta (565 aa).

The N-terminal stretch at 1 to 13 (MIVLLLLISYCFA) is a signal peptide. An N-linked (GlcNAc...) asparagine glycan is attached at N71. Catalysis depends on E347, which acts as the Proton donor.

This sequence belongs to the glycosyl hydrolase 20 family. In terms of assembly, heterodimer of one alpha subunit and one beta subunit. In terms of processing, glycosylated.

Its subcellular location is the cytoplasmic granule. It localises to the secreted. It catalyses the reaction Hydrolysis of terminal non-reducing N-acetyl-D-hexosamine residues in N-acetyl-beta-D-hexosaminides.. In terms of biological role, hydrolyzes the non-reducing end N-acetyl-D-hexosamine and/or sulfated N-acetyl-D-hexosamine of glycoconjugates. May contribute to amoebic pathogenicity and may be involved in the destruction of extracellular matrix components. The chain is Beta-hexosaminidase subunit beta from Entamoeba histolytica (strain ATCC 30459 / HM-1:IMSS / ABRM).